A 655-amino-acid chain; its full sequence is Probable glucan endo-1,3-beta-glucosidase btgC (655 aa).

Disordered regions lie at residues 1-61 and 89-114; these read MSGD…ATPG and SGVD…PGSD. Topologically, residues 1–282 are cytoplasmic; it reads MSGDPRSFSF…PKPGTGSRKR (282 aa). Residues 19–33 are compositionally biased toward polar residues; the sequence is DSSQQPLHPTNTMAD. The span at 89-98 shows a compositional bias: basic and acidic residues; the sequence is SGVDAFRDTD. A helical; Signal-anchor for type II membrane protein membrane pass occupies residues 283 to 303; it reads GWIVGIILAVVIVGAIVGGAV. The Extracellular portion of the chain corresponds to 304 to 655; that stretch reads GGTLGNREKE…IPDCGGKTAT (352 aa). The tract at residues 305 to 338 is disordered; sequence GTLGNREKESPSSSETASGDEKVNGDLGKDSDEI. Positions 323–338 are enriched in basic and acidic residues; it reads GDEKVNGDLGKDSDEI. Residue Asn-426 is glycosylated (N-linked (GlcNAc...) asparagine). Glu-458 serves as the catalytic Proton donor. The active-site Nucleophile is the Glu-557. Asn-576 and Asn-602 each carry an N-linked (GlcNAc...) asparagine glycan.

The protein belongs to the glycosyl hydrolase 17 family.

Its subcellular location is the cell membrane. The enzyme catalyses Hydrolysis of (1-&gt;3)-beta-D-glucosidic linkages in (1-&gt;3)-beta-D-glucans.. Functionally, glucanases play a role in cell expansion during growth, in cell-cell fusion during mating, and in spore release during sporulation. This enzyme may be involved in beta-glucan degradation. Active on laminarin and lichenan. The protein is Probable glucan endo-1,3-beta-glucosidase btgC (btgC) of Aspergillus terreus (strain NIH 2624 / FGSC A1156).